The following is a 238-amino-acid chain: Endonuclease III homolog (238 aa).

The region spanning 129–155 (REKGLPREMKDLISLPGIGNKMALLYM) is the HhH domain. The Nucleophile; for N-glycosylase activity role is filled by Lys149. The [4Fe-4S] cluster site is built by Cys217, Cys224, Cys227, and Cys233.

It belongs to the Nth/MutY family. Requires [4Fe-4S] cluster as cofactor.

Its subcellular location is the nucleus. The protein localises to the mitochondrion. It carries out the reaction 2'-deoxyribonucleotide-(2'-deoxyribose 5'-phosphate)-2'-deoxyribonucleotide-DNA = a 3'-end 2'-deoxyribonucleotide-(2,3-dehydro-2,3-deoxyribose 5'-phosphate)-DNA + a 5'-end 5'-phospho-2'-deoxyribonucleoside-DNA + H(+). In terms of biological role, bifunctional DNA N-glycosylase with associated apurinic/apyrimidinic (AP) lyase function that catalyzes the first step in base excision repair (BER), the primary repair pathway for the repair of oxidative DNA damage. The DNA N-glycosylase activity releases the damaged DNA base from DNA by cleaving the N-glycosidic bond, leaving an AP site. The AP lyase activity cleaves the phosphodiester bond 3' to the AP site by a beta-elimination. Primarily recognizes and repairs oxidative base damage of pyrimidines. In Encephalitozoon cuniculi (strain GB-M1) (Microsporidian parasite), this protein is Endonuclease III homolog.